The primary structure comprises 154 residues: MQIYEGKLTAEGLRFGIVASRFNHALVDRLVEGAIDCIVRHGGREEDITLVRVPGSWEIPVAAGELARKEDIDAVIAIGVLIRGATPHFDYIASEVSKGLANLSLELRKPITFGVITADTLEQAIERAGTKHGNKGWEAALSAIEMANLFKSLR.

5-amino-6-(D-ribitylamino)uracil is bound by residues phenylalanine 22 to asparagine 23, serine 56 to glutamate 58, and valine 80 to isoleucine 82. Alanine 85–threonine 86 is a binding site for (2S)-2-hydroxy-3-oxobutyl phosphate. Histidine 88 functions as the Proton donor in the catalytic mechanism. Phenylalanine 113 provides a ligand contact to 5-amino-6-(D-ribitylamino)uracil. A (2S)-2-hydroxy-3-oxobutyl phosphate-binding site is contributed by arginine 127. Lysine 135 contacts 5-amino-6-(D-ribitylamino)uracil.

This sequence belongs to the DMRL synthase family. As to quaternary structure, forms an icosahedral capsid composed of 60 subunits, arranged as a dodecamer of pentamers.

The enzyme catalyses (2S)-2-hydroxy-3-oxobutyl phosphate + 5-amino-6-(D-ribitylamino)uracil = 6,7-dimethyl-8-(1-D-ribityl)lumazine + phosphate + 2 H2O + H(+). The protein operates within cofactor biosynthesis; riboflavin biosynthesis; riboflavin from 2-hydroxy-3-oxobutyl phosphate and 5-amino-6-(D-ribitylamino)uracil: step 1/2. Catalyzes the formation of 6,7-dimethyl-8-ribityllumazine by condensation of 5-amino-6-(D-ribitylamino)uracil with 3,4-dihydroxy-2-butanone 4-phosphate. This is the penultimate step in the biosynthesis of riboflavin. This chain is 6,7-dimethyl-8-ribityllumazine synthase (ribH), found in Aquifex aeolicus (strain VF5).